The sequence spans 224 residues: Casparian strip membrane protein 3 (224 aa).

A disordered region spans residues 1 to 30; sequence MESKKEGVASAPTSPESRRTRSNGKGKTIA. Residues 1–57 are Cytoplasmic-facing; sequence MESKKEGVASAPTSPESRRTRSNGKGKTIAEATPPSVTVVSTKVTPSPRGGWRKGAA. A helical membrane pass occupies residues 58-78; that stretch reads ILDFILRLGAISSAIGAAAVM. Residues 79–105 lie on the Extracellular side of the membrane; sequence GNNEQILPFFTQFFQFHVQWDDFPMFQ. Residues 106-126 traverse the membrane as a helical segment; that stretch reads FFVFANGAAVVFLILSLPFSI. Residues 127–138 lie on the Cytoplasmic side of the membrane; the sequence is VCIVRPFAVGPR. The helical transmembrane segment at 139-159 threads the bilayer; that stretch reads LLLVIVDIFAMALVIAAASAA. The Extracellular portion of the chain corresponds to 160 to 191; sequence AAVVYLAHNGSQDANWIAICQQYTDFCQVTSQ. Asparagine 168 carries N-linked (GlcNAc...) asparagine glycosylation. The helical transmembrane segment at 192 to 212 threads the bilayer; sequence AVVASFVAAVFLICLIVLSSV. Topologically, residues 213 to 224 are cytoplasmic; that stretch reads ALKKGLKREFGW.

This sequence belongs to the Casparian strip membrane proteins (CASP) family. As to quaternary structure, homodimer and heterodimers.

It is found in the cell membrane. Its function is as follows. Regulates membrane-cell wall junctions and localized cell wall deposition. Required for establishment of the Casparian strip membrane domain (CSD) and the subsequent formation of Casparian strips, a cell wall modification of the root endodermis that determines an apoplastic barrier between the intraorganismal apoplasm and the extraorganismal apoplasm and prevents lateral diffusion. This Vigna unguiculata (Cowpea) protein is Casparian strip membrane protein 3.